We begin with the raw amino-acid sequence, 1903 residues long: MAFHNRRWNFTFSCCVVVLLLPLVAARPQQPSAATRVHEEYSTFRVENTEWTFNHLAVDHRNGNVYLGAVNRIYKLSPGLDIQVSHQTGPDEDNRNCYPPRIVQPCSEPLTLTNNVNKMLLMDYRENRLLACGSLYQGICKLLRLDDLFKLGEPFHKKEHYLSGVNESGSVFGVIVSYGDASPDKLFVATAVDGRPEYFPTISSRKLTRNSEEDGMFAYVFHDEFVASMIKIPSDTFTVVPDFDIYYVYGFSSGNFVYFLTLQPEMGGGPTTGSSSAGREQVYTSKLVRLCKDDTAFNSYVEVPLGCVKGGVEYRLLQAAYLSKAGTILARSLGIGPDDDILYAVFSKGQKRRPKESSQESALCVFTLKEINERIKDRLQSCYKGEGTLDLAWLKVKDISCSSALLTIDDNFCGLDMNAPLGVSEMVRGIPLFSESKDKMTSVIAYVYKNHSLAFVGTRGGRLKKIRVDGPTYGALQYETIQVVDNGPILRDMAFSSDQHFLYVMSESQLTRVPVEACEQYSSCNECLGSGDPHCGWCVLHSMCTRKEKCERSSEPRRFASNIKQCVRLSVHPNNISVSQYSVMLVLEAHNVPELSAGVNCTFEDLAEMDGLVEGNRITCSSPAEKEVPRIIVDQGDHQIVQLYLKSKETGLAFANTSFVFYNCSVHKSCLSCVGSPYQCHWCKYRHTCTHDPSSCSFQEGRVKQPEECPQLLPADRILVPVNVVKPITLRAKNLPQPQSGQRGYECVLTIQGVEQRVPALRFNSSSVQCQNTSYMYDGMEMSSLPVDLTVIWNGDFSIDNPAQNKVHLYKCDARRESCGLCLKADPLFGCVWCKGENRCSLKQHCSYPQSMWLEHNGINSKCTHPRITKITPLRGPREGGTLVTIRGENLGLEFSEIKDHVKVADVECTPVPEGYIPAEQIVCEMGKAERSQFAGNVQVCVGECRPEFMAKSSKYYYFVIPQLLSLKPSRGPISGGTIVNITGGNLDAGSNVSIMFKDQKCTYQRRGGQWITCRSHASMQGYGNVSVSVYVDKAHIHKDLKFEYVEDPTITKLEPEWSIFSGNTPLTVSGTNLDIIHTPLIRAKYKNLETINICQVLSPTTMQCMAPELPYSISKHKDVPERPDEFGFILDNVQSVLALNNTNFVYYPNPVFEPLSVSGVQELKPGSPIILKGRNFLPPTPGGNGKLNYTVLIGDKPCALTVSDTQLLCESPNLTGRHKVLARVGGIEFSPGVVHITSDSPLSSTAVISIAGAGGLLIFFIVIVLIAYKRKSRESDLTLKRLQMQMDNLESRVALECKEAFAELQTDIHELTSDLDGAGIPFLDYRTYTMRVLFPGIEEHPVLRDLEVPGYRQEQVEKGLKLFGQLINNKVFLLSFIRTLESQRGFSMRDRGNVASLIMTVLQSKLEYATDVLKHLLSDLIDKNLESKNHPKLLLRRTESVAEKMLTNWFTFLLYKFLKECAGEPLFSLFCAIKQQMEKGPIDSITGEARYSLSEDKLIRQQIDYKTLVVNCMHPDNEKSPEVQVKVLNCDTVSQVKEKILDAIYKNVPYSHRPKASDMDLEWRQGRVVRVILQDEDVTTKIEADWKRLNMLSHYQVTDNAVVALVPKQVTAYNSVNNSTVSRTSASKYENMIKYTGSPDSLRSRTPMITPDLESGVKVWHLVKNHEHGDQKEGDRGSKMVSEIYLTRLLATKGTLQKFVDDLFETIFSTAHRGSALPLAIKYMFDFLDEQADKHNIHDPHVRHTWKSNCLPLRFWVNVIKNPQFVFDIHKSSITDACLSVVAQTFMDSCSTSEHRLGKDSPSNKLLYAKDIPSYKSWVERYYSDISKMPAISDQDMNAYLAEQSRMHMNEFNTMSSLSEIYSYIGKYTEEIVSALEQDDGARKQRLAYKLEQVVAFMSLES.

Positions 1–26 (MAFHNRRWNFTFSCCVVVLLLPLVAA) are cleaved as a signal peptide. The 489-residue stretch at 27 to 515 (RPQQPSAATR…SESQLTRVPV (489 aa)) folds into the Sema domain. Residues 27-1246 (RPQQPSAATR…ITSDSPLSST (1220 aa)) lie on the Extracellular side of the membrane. 2 disulfides stabilise this stretch: Cys-97/Cys-106 and Cys-132/Cys-140. N-linked (GlcNAc...) asparagine glycosylation occurs at Asn-166. Intrachain disulfides connect Cys-291-Cys-413, Cys-307-Cys-364, and Cys-382-Cys-401. The N-linked (GlcNAc...) asparagine glycan is linked to Asn-450. Residues 517-567 (ACEQYSSCNECLGSGDPHCGWCVLHSMCTRKEKCERSSEPRRFASNIKQCV) enclose the PSI 1 domain. 4 disulfides stabilise this stretch: Cys-518-Cys-535, Cys-524-Cys-566, Cys-527-Cys-544, and Cys-538-Cys-550. N-linked (GlcNAc...) asparagine glycosylation is found at Asn-575 and Asn-600. A disulfide bridge connects residues Cys-601 and Cys-620. N-linked (GlcNAc...) asparagine glycosylation is found at Asn-656, Asn-663, Asn-764, and Asn-772. The PSI 2 domain occupies 663–710 (NCSVHKSCLSCVGSPYQCHWCKYRHTCTHDPSSCSFQEGRVKQPEECP). Positions 811-864 (KCDARRESCGLCLKADPLFGCVWCKGENRCSLKQHCSYPQSMWLEHNGINSKCT) constitute a PSI 3 domain. IPT/TIG domains follow at residues 866–960 (PRIT…YYFV), 962–1046 (PQLL…FEYV), 1049–1148 (PTIT…FVYY), and 1151–1246 (PVFE…LSST). 6 N-linked (GlcNAc...) asparagine glycosylation sites follow: Asn-981, Asn-992, Asn-1025, Asn-1141, Asn-1189, and Asn-1214. A helical membrane pass occupies residues 1247–1267 (AVISIAGAGGLLIFFIVIVLI). The Cytoplasmic portion of the chain corresponds to 1268 to 1903 (AYKRKSRESD…QVVAFMSLES (636 aa)).

This sequence belongs to the plexin family.

Its subcellular location is the cell membrane. Functionally, involved in the development of primary sensory neurons especially in branching of the peripheral axons. Interacts with the SLIT2 signaling specifically to promote axonal branching of Rohon-Beard neurons and the trigeminal sensory ganglion neurons. The sequence is that of Plexin-A4 (plxna4) from Danio rerio (Zebrafish).